We begin with the raw amino-acid sequence, 214 residues long: Adenylate kinase (214 aa).

An ATP-binding site is contributed by 10 to 15 (GAGKGT). The NMP stretch occupies residues 30-59 (STGDMLRAAVKAGTPLGLEAKKVMDAGQLV). AMP is bound by residues T31, R36, 57–59 (QLV), 85–88 (GFPR), and Q92. The tract at residues 122–159 (GRRVHPGSGRVYHVVFNPPKVEGKDDVTGEDLAIRPDD) is LID. ATP-binding positions include R123 and 132 to 133 (VY). Residues R156 and R167 each contribute to the AMP site. Position 200 (Q200) interacts with ATP.

This sequence belongs to the adenylate kinase family. Monomer.

The protein localises to the cytoplasm. The catalysed reaction is AMP + ATP = 2 ADP. It functions in the pathway purine metabolism; AMP biosynthesis via salvage pathway; AMP from ADP: step 1/1. Functionally, catalyzes the reversible transfer of the terminal phosphate group between ATP and AMP. Plays an important role in cellular energy homeostasis and in adenine nucleotide metabolism. The protein is Adenylate kinase of Shewanella oneidensis (strain ATCC 700550 / JCM 31522 / CIP 106686 / LMG 19005 / NCIMB 14063 / MR-1).